The chain runs to 94 residues: Large ribosomal subunit protein eL42 (94 aa).

The Zn(2+) site is built by cysteine 11, cysteine 14, cysteine 71, and cysteine 74. The C4-type zinc-finger motif lies at 11–74 (CPYCKRHTIH…LDLRFVCTVC (64 aa)).

This sequence belongs to the eukaryotic ribosomal protein eL42 family. As to quaternary structure, part of the 50S ribosomal subunit. Zn(2+) is required as a cofactor.

Functionally, binds to the 23S rRNA. In Pyrococcus horikoshii (strain ATCC 700860 / DSM 12428 / JCM 9974 / NBRC 100139 / OT-3), this protein is Large ribosomal subunit protein eL42.